The sequence spans 79 residues: Putative membrane protein insertion efficiency factor (79 aa).

Belongs to the UPF0161 family.

The protein localises to the cell inner membrane. Could be involved in insertion of integral membrane proteins into the membrane. This Rippkaea orientalis (strain PCC 8801 / RF-1) (Cyanothece sp. (strain PCC 8801)) protein is Putative membrane protein insertion efficiency factor.